Here is a 429-residue protein sequence, read N- to C-terminus: Ribosomal RNA small subunit methyltransferase B (429 aa).

Residues 254–260 (CAAPGGK), Asp-277, Asp-303, and Asp-322 each bind S-adenosyl-L-methionine. Residue Cys-375 is the Nucleophile of the active site. The tract at residues 397–419 (ALSETGTPDQPGQQNLPGGEEGD) is disordered. The span at 400 to 412 (ETGTPDQPGQQNL) shows a compositional bias: polar residues.

It belongs to the class I-like SAM-binding methyltransferase superfamily. RsmB/NOP family.

The protein resides in the cytoplasm. It catalyses the reaction cytidine(967) in 16S rRNA + S-adenosyl-L-methionine = 5-methylcytidine(967) in 16S rRNA + S-adenosyl-L-homocysteine + H(+). Specifically methylates the cytosine at position 967 (m5C967) of 16S rRNA. In Salmonella paratyphi B (strain ATCC BAA-1250 / SPB7), this protein is Ribosomal RNA small subunit methyltransferase B.